Here is a 629-residue protein sequence, read N- to C-terminus: MFYPDPFDVIIIGGGHAGTEAAMAAARMGQQTLLLTHNIDTLGQMSCNPAIGGIGKGHLVKEVDALGGLMAKAIDLAGIQFRILNASKGPAVRATRAQADRVLYRQAVRTALENQPNLMIFQQAVEDLIVENDRVVGAVTQMGLKFRAKAVVLTVGTFLDGKIHIGLDNYSGGRAGDPPSIPLSRRLRELPLRVGRLKTGTPPRIDARTIDFSVLAQQHGDNPMPVFSFMGNASQHPQQVPCYITHTNEKTHDVIRSNLDRSPMYAGVIEGVGPRYCPSIEDKVMRFADRNQHQIFLEPEGLTSNEIYPNGISTSLPFDVQMQIVRSMQGMENAKIVRPGYAIEYDFFDPRDLKPTLESKFIQGLFFAGQINGTTGYEEAAAQGLLAGLNAARLSADKEGWAPARSQAYLGVLVDDLCTLGTKEPYRMFTSRAEYRLMLREDNADLRLTEIGRELGLVDDERWARFNEKLENIERERQRLKSTWVTPSAEAAAEVNAHLTAPLSREASGEDLLRRPEMTYEKLTTLTPFAPALTDEQAAEQVEIQVKYEGYIARQQDEIEKQLRNENTLLPATLDYRQVSGLSNEVIAKLNDHKPASIGQASRISGVTPAAISILLVWLKKQGMLRRSA.

Residues 13-18 (GGGHAG), Val125, and Ser180 contribute to the FAD site. Residue 273–287 (GPRYCPSIEDKVMRF) coordinates NAD(+). FAD is bound at residue Gln370.

The protein belongs to the MnmG family. In terms of assembly, homodimer. Heterotetramer of two MnmE and two MnmG subunits. Requires FAD as cofactor.

It localises to the cytoplasm. Functionally, NAD-binding protein involved in the addition of a carboxymethylaminomethyl (cmnm) group at the wobble position (U34) of certain tRNAs, forming tRNA-cmnm(5)s(2)U34. The polypeptide is tRNA uridine 5-carboxymethylaminomethyl modification enzyme MnmG (Escherichia coli (strain SMS-3-5 / SECEC)).